Reading from the N-terminus, the 564-residue chain is Sulfite reductase [NADPH] hemoprotein beta-component 2 (564 aa).

[4Fe-4S] cluster is bound by residues C426, C432, C471, and C475. Siroheme is bound at residue C475.

Belongs to the nitrite and sulfite reductase 4Fe-4S domain family. Alpha(8)-beta(8). The alpha component is a flavoprotein, the beta component is a hemoprotein. The cofactor is siroheme. It depends on [4Fe-4S] cluster as a cofactor.

The catalysed reaction is hydrogen sulfide + 3 NADP(+) + 3 H2O = sulfite + 3 NADPH + 4 H(+). The protein operates within sulfur metabolism; hydrogen sulfide biosynthesis; hydrogen sulfide from sulfite (NADPH route): step 1/1. Functionally, component of the sulfite reductase complex that catalyzes the 6-electron reduction of sulfite to sulfide. This is one of several activities required for the biosynthesis of L-cysteine from sulfate. In Klebsiella pneumoniae (strain 342), this protein is Sulfite reductase [NADPH] hemoprotein beta-component 2.